The chain runs to 141 residues: Large ribosomal subunit protein uL11 (141 aa).

The protein belongs to the universal ribosomal protein uL11 family. Part of the ribosomal stalk of the 50S ribosomal subunit. Interacts with L10 and the large rRNA to form the base of the stalk. L10 forms an elongated spine to which L12 dimers bind in a sequential fashion forming a multimeric L10(L12)X complex. In terms of processing, one or more lysine residues are methylated.

In terms of biological role, forms part of the ribosomal stalk which helps the ribosome interact with GTP-bound translation factors. This chain is Large ribosomal subunit protein uL11, found in Streptococcus agalactiae serotype Ia (strain ATCC 27591 / A909 / CDC SS700).